Reading from the N-terminus, the 206-residue chain is MAGAVDTSKGLPSHPERATLEGKNKFLGFWFFLGGETILFATFFGTFLGLRGGTADGPTSADLVALDLVFIMTMLLLTSSLTSVLAMFAMKKNNFKAMMIWMWITVVLGLAFLGFEIYEFHHYVVDYQFGFSTSAFASAFYSLVGLHGAHVAFGLSWIIVLLIRYRKSGITLTNAPKFYVAGLYWHFIDVVWVFIFTVVYLMGVGG.

5 helical membrane passes run 26–46 (FLGF…FFGT), 68–88 (LVFI…LAMF), 97–117 (AMMI…GFEI), 143–163 (LVGL…VLLI), and 185–205 (WHFI…MGVG).

Belongs to the cytochrome c oxidase subunit 3 family.

It localises to the cell membrane. The catalysed reaction is 4 Fe(II)-[cytochrome c] + O2 + 8 H(+)(in) = 4 Fe(III)-[cytochrome c] + 2 H2O + 4 H(+)(out). This Alkalihalophilus pseudofirmus (strain ATCC BAA-2126 / JCM 17055 / OF4) (Bacillus pseudofirmus) protein is Cytochrome c oxidase subunit 3 (ctaE).